A 335-amino-acid chain; its full sequence is NmrA-like family domain-containing oxidoreductase hkm9 (335 aa).

Residues 12 to 17 (GATGNQ), 38 to 42 (RNPNS), 59 to 60 (DG), 80 to 82 (INS), Lys-137, and 161 to 164 (YLEN) each bind NADP(+).

It belongs to the NmrA-type oxidoreductase family.

Its pathway is secondary metabolite biosynthesis. NmrA-like family domain-containing oxidoreductase; part of the gene cluster that mediates the biosynthesis of hancockiamides, an unusual new family of N-cinnamoylated piperazines. The NRPS hkm10 and the NmrA-like reductase hkm9 are proposed to convert two molecules of L-Phe to the intermediary piperazine called xenocockiamide A. Xenocockiamide A is then converted to hancockiamide D via a series of hydroxylations and O-methylations. The tyrosinase hkm6 may catalyze an aromatic hydroxylation, then the 2-oxoglutarate-dependent Fe(II) dioxygenase hkm4 and the FAD-dependent phenol hydroxylase hkm7 may catalyze consecutive hydroxylations to install 2 more hydroxy groups, and the methyltransferase hkm8 probably catalyzes two methylations using 2 molecules of S-adenosyl-L-methionine (SAM). The NRPS hkm11 activates and transfers trans-cinnamate supplied by the PAL hkm12 to hancockiamide D and produces hancockiamide A. NRPS Hkm11 has the flexibility to tolerate the bulky hancockiamide G as a substrate and the absence of the acetyl-transferase hkm3 opens up the opportunity for hkm11 to introduce a second N-cinnamoyl moiety. The cytochrome P450 monooxygenase hkm5 catalyzes the methylenedioxy bridge formation, converting hancockiamide A into hancockiamide G. Hkm5 can also convert hancockiamide B into hancockiamide C, and hancockiamide D into hancockiamide H. The N-acetyltransferase hkm3 finally transfers an acetyl group to 1-N of piperazine, converting hancockiamide A into hancockiamide B and hancockiamide G into hancockiamide C. The protein is NmrA-like family domain-containing oxidoreductase hkm9 of Aspergillus hancockii.